The following is a 234-amino-acid chain: UPF0173 metal-dependent hydrolase Smed_0942 (234 aa).

It belongs to the UPF0173 family.

The chain is UPF0173 metal-dependent hydrolase Smed_0942 from Sinorhizobium medicae (strain WSM419) (Ensifer medicae).